A 261-amino-acid polypeptide reads, in one-letter code: Bcl-2-binding component 3, isoforms 3/4 (261 aa).

Residues 27–261 (QICGPRERHG…ASAGDFLCTM (235 aa)) form a disordered region. A compositionally biased stretch (low complexity) spans 40–50 (PGGQLPGARRG). A compositionally biased stretch (pro residues) spans 53-63 (PRRPAPLPARP). Residues 64–73 (PGALGSVLRP) are compositionally biased toward low complexity. Composition is skewed to basic residues over residues 74-87 (LRARPGCRPRRPHP) and 95-106 (RPHRPTRRHRRP). The span at 124 to 146 (PGRSSALALAGGAAPGVARAQRP) shows a compositional bias: low complexity. Residues 147-171 (GGSGGRSHPGGPGSPRGGGTVGPGD) are compositionally biased toward gly residues. Low complexity predominate over residues 172-197 (RGPAAADGGRPQRTVRAAETRGAAAA).

Does not interact with BCL2.

In terms of biological role, does not affect cell growth. This chain is Bcl-2-binding component 3, isoforms 3/4 (BBC3), found in Homo sapiens (Human).